A 288-amino-acid polypeptide reads, in one-letter code: MSEQEVTYTTLRFHKSSGLQNPVRPEETQRPRDVGHRECSVPWKFIVIVLGILCFLLLLTVAVLVIHIFRDGQEKHEQEKTLNNLRQEYQVMKNDSSLMEEMLRNKSSECKALNDSLHYLNREQNRCLRKTKIVLDCSQNKGKQVEGYWFCCGMKCYYFIMDDKKWNGCKQICQDYNLTLLKTNDEDELKFLKSQLQRNTYWISLTHHKSKEESQQIGDRPSKLDSAARNSVPNRQKCAYLSSFSTEEDDCARTHGCICEKRLNKFPIPGSCAKGRTQSALQRDEDES.

Over Met1 to Phe45 the chain is Cytoplasmic. A helical; Signal-anchor for type II membrane protein transmembrane segment spans residues Ile46–Ile66. Residues His67–Ser288 are Extracellular-facing. N-linked (GlcNAc...) asparagine glycans are attached at residues Asn94, Asn105, and Asn114. The 120-residue stretch at Gln144–Leu263 folds into the C-type lectin domain. Intrachain disulfides connect Cys151–Cys156, Cys169–Cys257, Cys173–Cys259, and Cys238–Cys251. N-linked (GlcNAc...) asparagine glycosylation occurs at Asn177.

As to quaternary structure, homodimer; disulfide-linked.

It is found in the membrane. Its function is as follows. Receptor on natural killer (NK) cells for class I MHC. This is Killer cell lectin-like receptor 2 (Klra2) from Mus musculus (Mouse).